Consider the following 432-residue polypeptide: C(50) beta-cyclic carotenoids biosynthesis protein LbtBC (432 aa).

The interval 1 to 140 (MTSLYTTLNL…DDDEVRTPER (140 aa)) is beta-cyclase. The next 3 helical transmembrane spans lie at 4–24 (LYTT…LLAA), 36–56 (LIGV…FDNI), and 83–103 (FAYA…LTAS). Positions 111 to 140 (GSPTVSGRGDALLTRAPEPGDDDEVRTPER) are disordered. The elongase/hydratase stretch occupies residues 141 to 432 (PGTPGLLTTL…IVLWSVLVWS (292 aa)). A run of 7 helical transmembrane segments spans residues 170-190 (YFLA…FFLV), 252-272 (ESSL…AKGL), 277-297 (IPFL…IVGW), 299-319 (IAGA…MLWG), 350-370 (AAVW…LAAA), 374-394 (ASGA…YVGV), and 409-429 (FLVL…WSVL).

The protein belongs to the UbiA prenyltransferase family. As to quaternary structure, may form a complex with LbtA.

Its subcellular location is the cell membrane. It carries out the reaction all-trans-lycopene + dimethylallyl diphosphate + H2O = dihydroisopentenyldehydrorhodopin + diphosphate. The catalysed reaction is isopentenyldehydrorhodopin + dimethylallyl diphosphate + H2O = dihydrobisanhydrobacterioruberin + diphosphate. The protein operates within carotenoid biosynthesis. Functionally, involved in the biosynthesis of C(50) beta-cyclic carotenoids. The elongase/hydratase domain catalyzes the elongation of lycopene by attaching a C(5) isoprene unit at C-2, as well as the hydroxylation of the previous end of the molecule. The enzyme acts at both ends of the substrate, and catalyzes the conversion of lycopene to the C(45) intermediate dihydroisopentenyldehydrorhodopin (DH-IDR) and the conversion of isopentenyldehydrorhodopin (IDR) to the C(50) carotenoid dihydrobisanhydrobacterioruberin (DH-BABR). The beta-cyclase domain may produce the C(50) beta-cyclic carotenoid C.p.450 from the C(50) carotenoid dihydrobisanhydrobacterioruberin (DH-BABR). The chain is C(50) beta-cyclic carotenoids biosynthesis protein LbtBC from Dietzia sp. (strain CQ4).